The chain runs to 148 residues: SsrA-binding protein (148 aa).

Residues glutamate 129–arginine 142 are compositionally biased toward basic and acidic residues. A disordered region spans residues glutamate 129 to threonine 148.

This sequence belongs to the SmpB family.

It is found in the cytoplasm. Its function is as follows. Required for rescue of stalled ribosomes mediated by trans-translation. Binds to transfer-messenger RNA (tmRNA), required for stable association of tmRNA with ribosomes. tmRNA and SmpB together mimic tRNA shape, replacing the anticodon stem-loop with SmpB. tmRNA is encoded by the ssrA gene; the 2 termini fold to resemble tRNA(Ala) and it encodes a 'tag peptide', a short internal open reading frame. During trans-translation Ala-aminoacylated tmRNA acts like a tRNA, entering the A-site of stalled ribosomes, displacing the stalled mRNA. The ribosome then switches to translate the ORF on the tmRNA; the nascent peptide is terminated with the 'tag peptide' encoded by the tmRNA and targeted for degradation. The ribosome is freed to recommence translation, which seems to be the essential function of trans-translation. This chain is SsrA-binding protein, found in Burkholderia orbicola (strain AU 1054).